The sequence spans 533 residues: Berberine bridge enzyme-like 12 (533 aa).

A signal peptide spans 1 to 20; it reads MYLIFLLFFAASYSMSLSSA. A disulfide bridge links Cys-32 with Cys-95. Residues Asn-35, Asn-70, Asn-133, Asn-296, Asn-412, and Asn-417 are each glycosylated (N-linked (GlcNAc...) asparagine). The region spanning 73–249 is the FAD-binding PCMH-type domain; that stretch reads SMPKPSIIIV…LAFKVKLVTV (177 aa). The 6-(S-cysteinyl)-8alpha-(pros-histidyl)-FAD (His-Cys) cross-link spans 110–174; that stretch reads HDYDGLSYVS…EVHAFPAGVC (65 aa).

This sequence belongs to the oxygen-dependent FAD-linked oxidoreductase family. FAD is required as a cofactor. In terms of processing, the FAD cofactor is bound via a bicovalent 6-S-cysteinyl, 8alpha-N1-histidyl FAD linkage.

The protein resides in the secreted. It is found in the cell wall. The polypeptide is Berberine bridge enzyme-like 12 (Arabidopsis thaliana (Mouse-ear cress)).